A 126-amino-acid polypeptide reads, in one-letter code: Probable S-adenosyl-L-methionine-binding protein MJ1583 (126 aa).

The TsaA-like domain maps to 4 to 126 (LKPIGVVEQN…FSEKLDCPKI (123 aa)). Residues 45–46 (HK), Arg75, and 106–109 (YNET) contribute to the S-adenosyl-L-methionine site.

Belongs to the tRNA methyltransferase O family.

This chain is Probable S-adenosyl-L-methionine-binding protein MJ1583, found in Methanocaldococcus jannaschii (strain ATCC 43067 / DSM 2661 / JAL-1 / JCM 10045 / NBRC 100440) (Methanococcus jannaschii).